The sequence spans 374 residues: Putative 2,3-diketo-5-methylthiopentyl-1-phosphate enolase (374 aa).

Residues K138, 164 to 167, H255, G327, and 349 to 350 contribute to the substrate site; these read QDDE and GG. Mg(2+) is bound at residue D166.

Belongs to the RuBisCO large chain family. Type IV subfamily. In terms of assembly, homodimer. The cofactor is Mg(2+).

The enzyme catalyses 5-methylsulfanyl-2,3-dioxopentyl phosphate = 2-hydroxy-5-methylsulfanyl-3-oxopent-1-enyl phosphate. Its pathway is amino-acid biosynthesis; L-methionine biosynthesis via salvage pathway; L-methionine from S-methyl-5-thio-alpha-D-ribose 1-phosphate: step 3/6. Functionally, catalyzes the enolization of 2,3-diketo-5-methylthiopentyl-1-phosphate (DK-MTP-1-P) into 2-hydroxy-3-keto-5-methylthiopentenyl-1-phosphate (HK-MTPenyl-1-P). The chain is Putative 2,3-diketo-5-methylthiopentyl-1-phosphate enolase (mtnW) from Shouchella clausii (strain KSM-K16) (Alkalihalobacillus clausii).